Consider the following 334-residue polypeptide: Protein U17/U16 (334 aa).

This sequence belongs to the herpesviridae US22 family. In terms of processing, isoform 1 is not glycosylated.

Functionally, isoform 3 can transactivate the human immunodeficiency virus type 1 promoter. In Homo sapiens (Human), this protein is Protein U17/U16 (U17/U16).